The primary structure comprises 341 residues: Elongation factor G (341 aa).

Belongs to the GTP-binding elongation factor family. EF-G/EF-2 subfamily.

Its subcellular location is the cytoplasm. Catalyzes the GTP-dependent ribosomal translocation step during translation elongation. During this step, the ribosome changes from the pre-translocational (PRE) to the post-translocational (POST) state as the newly formed A-site-bound peptidyl-tRNA and P-site-bound deacylated tRNA move to the P and E sites, respectively. Catalyzes the coordinated movement of the two tRNA molecules, the mRNA and conformational changes in the ribosome. This is Elongation factor G (fus) from Streptomyces ramocissimus.